A 676-amino-acid chain; its full sequence is MLKKPKRKPGRRTYGKSLKIFIPGTLFVHARKGFGFVSPDNPEEYPFDIFVPARDLRGALDGDHVIVSVLPYPRDGQKLKGTISEVLARGKTTLVGTITSLVSPTSALAYTSMSGSQSLIPVELLPGRTYKIGDRILLSTPPWVDKPQEGASPALQMLEFIGHITNAKADFQAIQAEYNLAEEFPPEVIEEASLFSQKHITQVLHSRKDLRDLLCFTIDSSTARDFDDAISLTYDHNNNYILGVHIADVSHYVTPHSHLDKEAAKRCNSTYFPGKVIPMLPSALSDNLCSLKPNVDRLAVSVFMTFTKSGHLSDYQIFRSVIRSKYRMTYDEVDNIIEKKHSHPLSKILNEMATLSKKFSDIREERGCIRFVLPSVTMSLDNLQEPVALIENHQTFSHKLIEEFMLKANEVVAYHISHQGVSLPFRSHEPPNDENLLAFQELAKNMGFDITFTPTQEPDYQYLLQTTSAGHPLEQVLHSQFVRSMKTASYSTENKGHYGLKLDYYTHFTSPIRRYIDLIVHRLLFNPLSIDQTHLEIIVRACSTKERVSAKAENSFENLKKTRFINKFLQEQPKTTYHAYIITANHEGLSFVVTEFCHEGFIAAAELPKEYSLKKNALPESIPDKMKPGASIKVTIDSVNLLTQKIVWSIATTTEDKPKKIKKTPSKKKGTKKRAS.

Residues 207–527 (RKDLRDLLCF…LIVHRLLFNP (321 aa)) form the RNB domain. The S1 motif domain maps to 566–651 (NKFLQEQPKT…LTQKIVWSIA (86 aa)). The segment at 656-676 (DKPKKIKKTPSKKKGTKKRAS) is disordered. Residues 659-676 (KKIKKTPSKKKGTKKRAS) show a composition bias toward basic residues.

It belongs to the RNR ribonuclease family. RNase R subfamily.

It is found in the cytoplasm. It catalyses the reaction Exonucleolytic cleavage in the 3'- to 5'-direction to yield nucleoside 5'-phosphates.. 3'-5' exoribonuclease that releases 5'-nucleoside monophosphates and is involved in maturation of structured RNAs. The sequence is that of Ribonuclease R from Chlamydia pneumoniae (Chlamydophila pneumoniae).